The following is an 884-amino-acid chain: Alanine--tRNA ligase (884 aa).

Residues H562, H566, C674, and H678 each contribute to the Zn(2+) site.

The protein belongs to the class-II aminoacyl-tRNA synthetase family. The cofactor is Zn(2+).

It is found in the cytoplasm. The catalysed reaction is tRNA(Ala) + L-alanine + ATP = L-alanyl-tRNA(Ala) + AMP + diphosphate. In terms of biological role, catalyzes the attachment of alanine to tRNA(Ala) in a two-step reaction: alanine is first activated by ATP to form Ala-AMP and then transferred to the acceptor end of tRNA(Ala). Also edits incorrectly charged Ser-tRNA(Ala) and Gly-tRNA(Ala) via its editing domain. The protein is Alanine--tRNA ligase of Rhizobium johnstonii (strain DSM 114642 / LMG 32736 / 3841) (Rhizobium leguminosarum bv. viciae).